The following is a 645-amino-acid chain: Threonine--tRNA ligase (645 aa).

The region spanning 1–61 (MIKITLPDGS…TSDSTVQLLT (61 aa)) is the TGS domain. Residues 242-541 (DHRKLGKELE…LIEHVAGNFP (300 aa)) are catalytic. Positions 337, 388, and 518 each coordinate Zn(2+).

The protein belongs to the class-II aminoacyl-tRNA synthetase family. As to quaternary structure, homodimer. Requires Zn(2+) as cofactor.

Its subcellular location is the cytoplasm. It catalyses the reaction tRNA(Thr) + L-threonine + ATP = L-threonyl-tRNA(Thr) + AMP + diphosphate + H(+). Its function is as follows. Catalyzes the attachment of threonine to tRNA(Thr) in a two-step reaction: L-threonine is first activated by ATP to form Thr-AMP and then transferred to the acceptor end of tRNA(Thr). Also edits incorrectly charged L-seryl-tRNA(Thr). The sequence is that of Threonine--tRNA ligase from Cytophaga hutchinsonii (strain ATCC 33406 / DSM 1761 / CIP 103989 / NBRC 15051 / NCIMB 9469 / D465).